Reading from the N-terminus, the 233-residue chain is Ribonuclease HII (233 aa).

The RNase H type-2 domain maps to 26–215 (QLVAGIDEVG…VRASEGEGLE (190 aa)). Asp32, Glu33, and Asp124 together coordinate a divalent metal cation. Residues 211-233 (GEGLETAAGRQSSEGKKGRRPRG) form a disordered region.

This sequence belongs to the RNase HII family. Mn(2+) serves as cofactor. Requires Mg(2+) as cofactor.

Its subcellular location is the cytoplasm. The enzyme catalyses Endonucleolytic cleavage to 5'-phosphomonoester.. Functionally, endonuclease that specifically degrades the RNA of RNA-DNA hybrids. This is Ribonuclease HII from Syntrophobacter fumaroxidans (strain DSM 10017 / MPOB).